We begin with the raw amino-acid sequence, 130 residues long: Small ribosomal subunit protein uS8 (130 aa).

Belongs to the universal ribosomal protein uS8 family. In terms of assembly, part of the 30S ribosomal subunit. Contacts proteins S5 and S12.

Its function is as follows. One of the primary rRNA binding proteins, it binds directly to 16S rRNA central domain where it helps coordinate assembly of the platform of the 30S subunit. This Tolumonas auensis (strain DSM 9187 / NBRC 110442 / TA 4) protein is Small ribosomal subunit protein uS8.